Consider the following 23-residue polypeptide: Brevinin-1SE (23 aa).

Cys17 and Cys23 are oxidised to a cystine.

In terms of tissue distribution, expressed by the skin glands.

The protein localises to the secreted. Functionally, mast cell degranulating peptide. Causes histamine release from rat peritoneal mast cells in vitro. Has antibacterial activity against the Gram-negative bacterium E.coli K12 and Gram-positive bacterium M.luteus NCT C2665. The chain is Brevinin-1SE from Lithobates sevosus (Dusky gopher frog).